Here is a 132-residue protein sequence, read N- to C-terminus: Large ribosomal subunit protein eL28 (132 aa).

The protein belongs to the eukaryotic ribosomal protein eL28 family.

This is Large ribosomal subunit protein eL28 (rpl28) from Dictyostelium discoideum (Social amoeba).